A 215-amino-acid polypeptide reads, in one-letter code: Urease accessory protein UreG (215 aa).

The interval 1–21 (MNAPASSPARRTKKLPPLRVG) is disordered. A GTP-binding site is contributed by 24–31 (GPVGSGKT).

The protein belongs to the SIMIBI class G3E GTPase family. UreG subfamily. In terms of assembly, homodimer. UreD, UreF and UreG form a complex that acts as a GTP-hydrolysis-dependent molecular chaperone, activating the urease apoprotein by helping to assemble the nickel containing metallocenter of UreC. The UreE protein probably delivers the nickel.

The protein resides in the cytoplasm. In terms of biological role, facilitates the functional incorporation of the urease nickel metallocenter. This process requires GTP hydrolysis, probably effectuated by UreG. In Burkholderia vietnamiensis (strain G4 / LMG 22486) (Burkholderia cepacia (strain R1808)), this protein is Urease accessory protein UreG.